The sequence spans 262 residues: Matrilysin (262 aa).

The N-terminal stretch at 1–12 (LCVLCLLPQSPA) is a signal peptide. A propeptide spans 13–89 (LPLPREAGGH…PRCGLPDTGE (77 aa)) (activation peptide). The Cysteine switch signature appears at 80–87 (PRCGLPDT). C82 contacts Zn(2+). D148 is a Ca(2+) binding site. Zn(2+) is bound by residues H158 and D160. D165, G166, G168, and T170 together coordinate Ca(2+). Position 173 (H173) interacts with Zn(2+). Positions 180, 182, and 184 each coordinate Ca(2+). Residue H186 participates in Zn(2+) binding. Ca(2+)-binding residues include D188 and E191. H209 contacts Zn(2+). The active site involves E210. 2 residues coordinate Zn(2+): H213 and H219.

The protein belongs to the peptidase M10A family. The cofactor is Ca(2+). Zn(2+) is required as a cofactor.

The protein resides in the secreted. It is found in the extracellular space. It localises to the extracellular matrix. The enzyme catalyses Cleavage of 14-Ala-|-Leu-15 and 16-Tyr-|-Leu-17 in B chain of insulin. No action on collagen types I, II, IV, V. Cleaves gelatin chain alpha2(I) &gt; alpha1(I).. Degrades casein, gelatins of types I, III, IV, and V, and fibronectin. Activates procollagenase. In Felis catus (Cat), this protein is Matrilysin (MMP7).